The following is a 61-amino-acid chain: Conotoxin TxMRCL-04 (61 aa).

Positions 1-22 (MRCLPVFVILLLLIASTPSVDA) are cleaved as a signal peptide. Positions 23-46 (QLKTKDDMSLASFHDNVKRILQIR) are excised as a propeptide.

It belongs to the conotoxin T superfamily. Post-translationally, contains 2 disulfide bonds that can be either 'C1-C3, C2-C4' or 'C1-C4, C2-C3', since these disulfide connectivities have been observed for conotoxins with cysteine framework V (for examples, see AC P0DQQ7 and AC P81755). In terms of tissue distribution, expressed by the venom duct.

It is found in the secreted. This Conus textile (Cloth-of-gold cone) protein is Conotoxin TxMRCL-04.